The primary structure comprises 706 residues: Probable protein S-acyltransferase 20 (706 aa).

A run of 2 helical transmembrane segments spans residues 16–36 and 41–61; these read VIAITVFCLLVVAFYAFFAPF and IWEYVLIGVYSPVAILVFVLY. Residues 172–222 form the DHHC domain; that stretch reads LFCTLCNCEVRKFSKHCRSCDKCVDCFDHHCKWLNNCVGRKNYVTFVSLMS. The S-palmitoyl cysteine intermediate role is filled by C202. 2 helical membrane passes run 220–240 and 275–295; these read LMSASLLWLIIEAAVGIAVIV and AVAIFACFPLGELLFFHMLLI. Disordered regions lie at residues 470–505, 591–621, and 680–706; these read SSLSRNSFAPSQGSRDEYDTGSHGMSNLSSPSHVHE, LNPSSQTASTQNPRPILPAHDSSSGSSALRD, and RDSTSNQLPVFAPGGLGANSQTGSNIK. Polar residues-rich tracts occupy residues 492 to 501, 591 to 603, and 697 to 706; these read HGMSNLSSPS, LNPSSQTASTQNP, and ANSQTGSNIK.

It belongs to the DHHC palmitoyltransferase family.

It localises to the cell membrane. Its subcellular location is the cytoplasmic vesicle membrane. It carries out the reaction L-cysteinyl-[protein] + hexadecanoyl-CoA = S-hexadecanoyl-L-cysteinyl-[protein] + CoA. Functionally, palmitoyl acyltransferase. The protein is Probable protein S-acyltransferase 20 (PAT20) of Arabidopsis thaliana (Mouse-ear cress).